Here is a 952-residue protein sequence, read N- to C-terminus: Isoleucine--tRNA ligase (952 aa).

The short motif at 58-68 (PYANGDIHIGH) is the 'HIGH' region element. Glu-576 serves as a coordination point for L-isoleucyl-5'-AMP. The 'KMSKS' region motif lies at 617–621 (KMSKS). Residue Lys-620 participates in ATP binding. Zn(2+) is bound by residues Cys-915, Cys-918, Cys-935, and Cys-938.

This sequence belongs to the class-I aminoacyl-tRNA synthetase family. IleS type 1 subfamily. As to quaternary structure, monomer. It depends on Zn(2+) as a cofactor.

The protein resides in the cytoplasm. The catalysed reaction is tRNA(Ile) + L-isoleucine + ATP = L-isoleucyl-tRNA(Ile) + AMP + diphosphate. Catalyzes the attachment of isoleucine to tRNA(Ile). As IleRS can inadvertently accommodate and process structurally similar amino acids such as valine, to avoid such errors it has two additional distinct tRNA(Ile)-dependent editing activities. One activity is designated as 'pretransfer' editing and involves the hydrolysis of activated Val-AMP. The other activity is designated 'posttransfer' editing and involves deacylation of mischarged Val-tRNA(Ile). This is Isoleucine--tRNA ligase from Aliivibrio fischeri (strain ATCC 700601 / ES114) (Vibrio fischeri).